Reading from the N-terminus, the 217-residue chain is Ras-related protein RIC2 (217 aa).

GTP-binding positions include 21 to 28 (GDSGVGKS), 69 to 73 (DTAGQ), and 127 to 130 (NKSD). Residues Cys214 and Cys215 are each lipidated (S-geranylgeranyl cysteine).

This sequence belongs to the small GTPase superfamily. Rab family.

It is found in the cell membrane. Its function is as follows. Possesses GTPase activity. The sequence is that of Ras-related protein RIC2 (RIC2) from Oryza sativa subsp. japonica (Rice).